Here is a 226-residue protein sequence, read N- to C-terminus: Phosphoribosylformylglycinamidine synthase subunit PurQ (226 aa).

The region spanning 3-225 is the Glutamine amidotransferase type-1 domain; that stretch reads FAVIVFPGSN…VKWGARHVTY (223 aa). Catalysis depends on C86, which acts as the Nucleophile. Residues H194 and E196 contribute to the active site.

As to quaternary structure, part of the FGAM synthase complex composed of 1 PurL, 1 PurQ and 2 PurS subunits.

Its subcellular location is the cytoplasm. It catalyses the reaction N(2)-formyl-N(1)-(5-phospho-beta-D-ribosyl)glycinamide + L-glutamine + ATP + H2O = 2-formamido-N(1)-(5-O-phospho-beta-D-ribosyl)acetamidine + L-glutamate + ADP + phosphate + H(+). The catalysed reaction is L-glutamine + H2O = L-glutamate + NH4(+). It participates in purine metabolism; IMP biosynthesis via de novo pathway; 5-amino-1-(5-phospho-D-ribosyl)imidazole from N(2)-formyl-N(1)-(5-phospho-D-ribosyl)glycinamide: step 1/2. Part of the phosphoribosylformylglycinamidine synthase complex involved in the purines biosynthetic pathway. Catalyzes the ATP-dependent conversion of formylglycinamide ribonucleotide (FGAR) and glutamine to yield formylglycinamidine ribonucleotide (FGAM) and glutamate. The FGAM synthase complex is composed of three subunits. PurQ produces an ammonia molecule by converting glutamine to glutamate. PurL transfers the ammonia molecule to FGAR to form FGAM in an ATP-dependent manner. PurS interacts with PurQ and PurL and is thought to assist in the transfer of the ammonia molecule from PurQ to PurL. The protein is Phosphoribosylformylglycinamidine synthase subunit PurQ of Exiguobacterium sp. (strain ATCC BAA-1283 / AT1b).